The primary structure comprises 375 residues: cAMP-dependent protein kinase regulatory subunit (375 aa).

The tract at residues 28 to 142 (RFCADYFNER…SLYKSVSHNF (115 aa)) is dimerization and phosphorylation. Basic and acidic residues predominate over residues 41-50 (REEADDDGPR). The interval 41–102 (REEADDDGPR…EPAAPFTRRT (62 aa)) is disordered. Residues 64–82 (GSSSRSTDGSLFRSSFADT) show a composition bias toward polar residues. Residues 83–97 (SSEGPGSASSEPAAP) show a composition bias toward low complexity. Residue Ser-103 is modified to Phosphoserine. 3',5'-cyclic AMP contacts are provided by residues 143 to 258 (LFGN…FLKE), Glu-208, Arg-217, 261 to 375 (ILSD…DPTK), Glu-328, and Arg-337.

Belongs to the cAMP-dependent kinase regulatory chain family. In terms of assembly, tetramer, composed of 2 regulatory (R) and 2 catalytic (C) subunits. In the presence of cAMP it dissociates into 2 active monomeric C subunits and an R dimer.

In Yarrowia lipolytica (strain CLIB 122 / E 150) (Yeast), this protein is cAMP-dependent protein kinase regulatory subunit (PKAR).